The primary structure comprises 285 residues: VQ motif-containing protein 20 (285 aa).

A compositionally biased stretch (basic and acidic residues) spans M1–P10. The disordered stretch occupies residues M1–A68. Residues Y11–K23 are compositionally biased toward basic residues. A VQ motif is present at residues F91–G100. A disordered region spans residues Y195–Y218. A compositionally biased stretch (pro residues) spans P201 to S216.

The protein localises to the nucleus. Its function is as follows. May function as negative regulator of plant defense. This chain is VQ motif-containing protein 20, found in Arabidopsis thaliana (Mouse-ear cress).